Reading from the N-terminus, the 517-residue chain is Probable mannosyltransferase KTR7 (517 aa).

Residues 1-23 (MAIRLNPKVRRFLLDKCRQKRYG) are Cytoplasmic-facing. The helical; Signal-anchor for type II membrane protein transmembrane segment at 24–44 (FLFLGCIFAILYCMGTWPFFA) threads the bilayer. Residues 45–85 (KDIVHDPNNLPYSLQDYSTDKDEPFFRGCTDTKLYLQNPAY) are stem region. Residues 45–517 (KDIVHDPNNL…IRRENFRVIE (473 aa)) lie on the Lumenal side of the membrane. Residues 86–517 (SKMNASFVML…IRRENFRVIE (432 aa)) form a catalytic region. Residues Asn89 and Asn144 are each glycosylated (N-linked (GlcNAc...) asparagine). Glu367 (nucleophile) is an active-site residue.

Belongs to the glycosyltransferase 15 family.

It is found in the membrane. Its function is as follows. Possible glycosyltransferase that transfers an alpha-D-mannosyl residue from GDP-mannose into lipid-linked oligosaccharide, forming an alpha-(1-&gt;2)-D-mannosyl-D-mannose linkage. The chain is Probable mannosyltransferase KTR7 (KTR7) from Saccharomyces cerevisiae (strain ATCC 204508 / S288c) (Baker's yeast).